Reading from the N-terminus, the 242-residue chain is tRNA (guanine-N(7)-)-methyltransferase (242 aa).

Glu-66, Glu-91, Asp-118, and Asp-141 together coordinate S-adenosyl-L-methionine. The active site involves Asp-141. Residues Lys-145, Asp-177, and 214–217 (TKFE) each bind substrate.

This sequence belongs to the class I-like SAM-binding methyltransferase superfamily. TrmB family. In terms of assembly, monomer.

It catalyses the reaction guanosine(46) in tRNA + S-adenosyl-L-methionine = N(7)-methylguanosine(46) in tRNA + S-adenosyl-L-homocysteine. It participates in tRNA modification; N(7)-methylguanine-tRNA biosynthesis. In terms of biological role, catalyzes the formation of N(7)-methylguanine at position 46 (m7G46) in tRNA. The polypeptide is tRNA (guanine-N(7)-)-methyltransferase (Buchnera aphidicola subsp. Baizongia pistaciae (strain Bp)).